We begin with the raw amino-acid sequence, 447 residues long: Glutamate--tRNA ligase 1 (447 aa).

A 'HIGH' region motif is present at residues 10-20 (PSPTGMLHVGN). Residues 240–244 (KISKR) carry the 'KMSKS' region motif. An ATP-binding site is contributed by Lys-243.

Belongs to the class-I aminoacyl-tRNA synthetase family. Glutamate--tRNA ligase type 1 subfamily. As to quaternary structure, monomer.

Its subcellular location is the cytoplasm. The enzyme catalyses tRNA(Glu) + L-glutamate + ATP = L-glutamyl-tRNA(Glu) + AMP + diphosphate. Its function is as follows. Catalyzes the attachment of glutamate to tRNA(Glu) in a two-step reaction: glutamate is first activated by ATP to form Glu-AMP and then transferred to the acceptor end of tRNA(Glu). In Rickettsia conorii (strain ATCC VR-613 / Malish 7), this protein is Glutamate--tRNA ligase 1.